A 151-amino-acid chain; its full sequence is Large ribosomal subunit protein uL13 (151 aa).

This sequence belongs to the universal ribosomal protein uL13 family. Part of the 50S ribosomal subunit.

In terms of biological role, this protein is one of the early assembly proteins of the 50S ribosomal subunit, although it is not seen to bind rRNA by itself. It is important during the early stages of 50S assembly. The chain is Large ribosomal subunit protein uL13 from Microcystis aeruginosa (strain NIES-843 / IAM M-2473).